Consider the following 400-residue polypeptide: Glycine betaine/proline betaine transport system ATP-binding protein ProV (400 aa).

Residues 29-265 (LSKEQILEKT…PANDYVRTFF (237 aa)) form the ABC transporter domain. Residue 61–68 (GLSGSGKS) participates in ATP binding. CBS domains lie at 280–341 (ARRS…GIEA) and 343–400 (LIDD…GNNG).

Belongs to the ABC transporter superfamily. In terms of assembly, the complex is composed of two ATP-binding proteins (ProV), two transmembrane proteins (ProW) and a solute-binding protein (ProX).

It is found in the cell inner membrane. In terms of biological role, part of the ProU ABC transporter complex involved in glycine betaine and proline betaine uptake. Probably responsible for energy coupling to the transport system. This Salmonella typhimurium (strain LT2 / SGSC1412 / ATCC 700720) protein is Glycine betaine/proline betaine transport system ATP-binding protein ProV.